The following is a 47-amino-acid chain: Large ribosomal subunit protein bL34 (47 aa).

It belongs to the bacterial ribosomal protein bL34 family.

The polypeptide is Large ribosomal subunit protein bL34 (Rhodococcus erythropolis (strain PR4 / NBRC 100887)).